The following is a 221-amino-acid chain: GTPase Obg (221 aa).

Residues 1–61 (PSALRLVLLN…LKYKLLEIVQ (61 aa)) enclose the OBG-type G domain. Residues 10 to 13 (NKAD) and 42 to 44 (SAV) contribute to the GTP site. One can recognise an OCT domain in the interval 82 to 162 (VVHRTKGQFQ…IGGISFEWEP (81 aa)).

It belongs to the TRAFAC class OBG-HflX-like GTPase superfamily. OBG GTPase family. Monomer. It depends on Mg(2+) as a cofactor.

It is found in the cytoplasm. Its function is as follows. An essential GTPase which binds GTP, GDP and possibly (p)ppGpp with moderate affinity, with high nucleotide exchange rates and a fairly low GTP hydrolysis rate. Plays a role in control of the cell cycle, stress response, ribosome biogenesis and in those bacteria that undergo differentiation, in morphogenesis control. The polypeptide is GTPase Obg (Corynebacterium melassecola).